The sequence spans 235 residues: Claudin-16 (235 aa).

The Cytoplasmic portion of the chain corresponds to 1–3 (MKD). A helical membrane pass occupies residues 4-24 (LLQYAACFLAIFSTGFLIVAT). Topologically, residues 25-79 (WTDCWMVNADDSLEVSTKCRGLWWECVTNAFDGIRTCDEYDSIYAEHPLKLVVTR) are extracellular. The chain crosses the membrane as a helical span at residues 80 to 100 (ALMITADILAGFGFITLLLGL). The Cytoplasmic segment spans residues 101–115 (DCVKFLPDDPQIKVR). A helical transmembrane segment spans residues 116–136 (LCFVAGTTLLIAGTPGIIGSV). Residues 137–169 (WYAVDVYVERSSLVLHNIFLGIQYKFGWSCWLG) are Extracellular-facing. The helical transmembrane segment at 170 to 190 (MAGSLGCFLAGALLTCCLYLF) threads the bilayer. Over 191-235 (KDVGPERNYPYAMRKPYSTAGVSMAKSYKAPRTETAKMYAVDTRV) the chain is Cytoplasmic. Residues 233 to 235 (TRV) carry the Interaction with TJP1 motif.

Belongs to the claudin family. In terms of assembly, can form heteropolymeric tight junction strands with other claudins. Interacts with CLDN19. Cannot form tight junction strands on its own. Interacts (via PDZ-binding motif TRV) with TJP1 (via PDZ domain). As to expression, expressed in the corticomedullary axis of the TAL, specifically in the cortex and the outer stripe of outer medulla (OSOM) zone (at protein level).

The protein resides in the cell junction. Its subcellular location is the tight junction. The protein localises to the cell membrane. It carries out the reaction Mg(2+)(in) = Mg(2+)(out). It catalyses the reaction Ca(2+)(in) = Ca(2+)(out). The enzyme catalyses Na(+)(in) = Na(+)(out). The catalysed reaction is K(+)(in) = K(+)(out). It carries out the reaction Rb(+)(in) = Rb(+)(out). It catalyses the reaction Cs(+)(in) = Cs(+)(out). The enzyme catalyses Li(+)(in) = Li(+)(out). Functionally, forms paracellular channels: coassembles with CLDN19 into tight junction strands with cation-selective channels through the strands, conveying epithelial permeability in a process known as paracellular tight junction permeability. Involved in the maintenance of ion gradients along the nephron. In the thick ascending limb (TAL) of Henle's loop, facilitates sodium paracellular permeability from the interstitial compartment to the lumen, contributing to the lumen-positive transepithelial potential that drives paracellular magnesium and calcium reabsorption. This chain is Claudin-16, found in Mus musculus (Mouse).